The primary structure comprises 64 residues: MSESTKETIEVLYEIGTLLGTELDKTTLSLCISLCENNVHPEAIAQIIREIRMAQEQTVDTEPS.

This sequence belongs to the MOZART1 family. Part of the gamma-tubulin complex. Interacts directly with alp6/GPC3.

The protein resides in the cytoplasm. It localises to the cytoskeleton. It is found in the microtubule organizing center. Its subcellular location is the spindle pole body. In terms of biological role, required for gamma-tubulin complex recruitment to the microtubule organizing center (MTOC). The sequence is that of Mitotic-spindle organizing protein 1 (mzt1) from Schizosaccharomyces pombe (strain 972 / ATCC 24843) (Fission yeast).